The chain runs to 298 residues: Apolipoprotein E (298 aa).

The first 18 residues, 1 to 18 (MKILWAALVLTLLAGCRA), serve as a signal peptide directing secretion. Repeat copies occupy residues 74–95 (LLMEDTMKELKAYKSELEKEVG), 96–117 (PMAEDTKARLSKELQGAQARLA), 118–139 (GDMEEVRNRLSQYRSEVQAMLG), 140–161 (QSSEELRARLASHLRKLRKRLQ), 162–183 (RDAEELQKRLAVYKAGAQEGAE), and 223–244 (GRLEKVGSQARDRLEEVREQME). Residues 74-244 (LLMEDTMKEL…RLEEVREQME (171 aa)) are 8 X 22 AA approximate tandem repeats. M137 is modified (methionine sulfoxide). The residue at position 141 (S141) is a Phosphoserine. The interval 152–162 (HLRKLRKRLQR) is LDL and other lipoprotein receptors binding. 156-159 (LRKR) serves as a coordination point for heparin. The tract at residues 204–272 (ALTSHPLRER…SWFEPMVEDL (69 aa)) is lipid-binding and lipoprotein association. 218–225 (GEQVRGRL) is a heparin binding site. The tract at residues 260–272 (RLKSWFEPMVEDL) is specificity for association with VLDL.

The protein belongs to the apolipoprotein A1/A4/E family. Homotetramer. May interact with ABCA1; functionally associated with ABCA1 in the biogenesis of HDLs. May interact with APP/A4 amyloid-beta peptide; the interaction is extremely stable in vitro but its physiological significance is unclear. May interact with MAPT. May interact with MAP2. In the cerebrospinal fluid, interacts with secreted SORL1. Interacts with PMEL; this allows the loading of PMEL luminal fragment on ILVs to induce fibril nucleation. In terms of processing, APOE exists as multiple glycosylated and sialylated glycoforms within cells and in plasma. The extent of glycosylation and sialylation are tissue and context specific. Glycated in plasma VLDL. Post-translationally, phosphorylated by FAM20C in the extracellular medium.

It localises to the secreted. The protein resides in the extracellular space. Its subcellular location is the extracellular matrix. It is found in the extracellular vesicle. The protein localises to the endosome. It localises to the multivesicular body. APOE is an apolipoprotein, a protein associating with lipid particles, that mainly functions in lipoprotein-mediated lipid transport between organs via the plasma and interstitial fluids. APOE is a core component of plasma lipoproteins and is involved in their production, conversion and clearance. Apolipoproteins are amphipathic molecules that interact both with lipids of the lipoprotein particle core and the aqueous environment of the plasma. As such, APOE associates with chylomicrons, chylomicron remnants, very low density lipoproteins (VLDL) and intermediate density lipoproteins (IDL) but shows a preferential binding to high-density lipoproteins (HDL). It also binds a wide range of cellular receptors including the LDL receptor/LDLR, the LDL receptor-related proteins LRP1, LRP2 and LRP8 and the very low-density lipoprotein receptor/VLDLR that mediate the cellular uptake of the APOE-containing lipoprotein particles. Finally, APOE also has a heparin-binding activity and binds heparan-sulfate proteoglycans on the surface of cells, a property that supports the capture and the receptor-mediated uptake of APOE-containing lipoproteins by cells. A main function of APOE is to mediate lipoprotein clearance through the uptake of chylomicrons, VLDLs, and HDLs by hepatocytes. APOE is also involved in the biosynthesis by the liver of VLDLs as well as their uptake by peripheral tissues ensuring the delivery of triglycerides and energy storage in muscle, heart and adipose tissues. By participating in the lipoprotein-mediated distribution of lipids among tissues, APOE plays a critical role in plasma and tissues lipid homeostasis. APOE is also involved in two steps of reverse cholesterol transport, the HDLs-mediated transport of cholesterol from peripheral tissues to the liver, and thereby plays an important role in cholesterol homeostasis. First, it is functionally associated with ABCA1 in the biogenesis of HDLs in tissues. Second, it is enriched in circulating HDLs and mediates their uptake by hepatocytes. APOE also plays an important role in lipid transport in the central nervous system, regulating neuron survival and sprouting. This chain is Apolipoprotein E (APOE), found in Hydrochoerus hydrochaeris (Capybara).